A 572-amino-acid chain; its full sequence is Protein IQ-DOMAIN 30 (572 aa).

The tract at residues 75 to 96 (SDDEIQVSEVQPTDSQDVASVP) is disordered. Positions 82-92 (SEVQPTDSQDV) are enriched in polar residues. IQ domains lie at 108-136 (QEIA…GIIR) and 137-154 (LQAL…VSTL). The calmodulin-binding stretch occupies residues 159 to 178 (GIVRLQALARGREIRHSDIG). Disordered regions lie at residues 282 to 332 (RPKK…MDNP) and 399 to 572 (IQTH…EWKR). 2 stretches are compositionally biased toward polar residues: residues 291–305 (PSSN…QTSS) and 400–419 (QTHT…VNQI). Residues 428–455 (AEEKEDVKEERTPKQNHKENSAGKENQK) show a composition bias toward basic and acidic residues. Polar residues-rich tracts occupy residues 459-493 (KASS…QATK), 502-514 (QGSS…GTTE), and 522-560 (LPSS…SSRE).

Belongs to the IQD family. In terms of assembly, binds to multiple calmodulin (CaM) in the presence of Ca(2+) and CaM-like proteins.

The protein resides in the nucleus envelope. The protein localises to the cytoplasm. It is found in the cytoskeleton. Its function is as follows. May be involved in cooperative interactions with calmodulins or calmodulin-like proteins. Recruits calmodulin proteins to microtubules, thus being a potential scaffold in cellular signaling and trafficking. May associate with nucleic acids and regulate gene expression at the transcriptional or post-transcriptional level. This is Protein IQ-DOMAIN 30 from Arabidopsis thaliana (Mouse-ear cress).